Reading from the N-terminus, the 133-residue chain is Glycine cleavage system H protein (133 aa).

One can recognise a Lipoyl-binding domain in the interval 30–112 (TITVGITHHA…YGAGWFFKIK (83 aa)). At lysine 71 the chain carries N6-lipoyllysine.

It belongs to the GcvH family. In terms of assembly, the glycine cleavage system is composed of four proteins: P, T, L and H. (R)-lipoate serves as cofactor.

The glycine cleavage system catalyzes the degradation of glycine. The H protein shuttles the methylamine group of glycine from the P protein to the T protein. In Neisseria gonorrhoeae (strain ATCC 700825 / FA 1090), this protein is Glycine cleavage system H protein.